Here is a 242-residue protein sequence, read N- to C-terminus: MSQITMRQMIEAGVHFGHQTRFWNPKMAQYIFGARNKIHIVNLEKTLPMFQEAQEAVRRLVANKGTVLFVGTKRQARDIIREEATRAGMPFVDHRWLGGMLTNYKTVKQSIKRLEEKTAALENAAESGFSKKEILEMQRDVEKLERSLGGIKNMKGLPDAIFVIDTGYQKGTLVEAEKLGIPVIAVVDTNNSPDGVKYVIPGNDDSAKAIRLYCRGIADAVLEGKNQALQETVAAAQETAAE.

Belongs to the universal ribosomal protein uS2 family.

This is Small ribosomal subunit protein uS2 from Neisseria gonorrhoeae (strain ATCC 700825 / FA 1090).